The sequence spans 264 residues: Pyridoxine 5'-phosphate synthase (264 aa).

Asparagine 28 contacts 3-amino-2-oxopropyl phosphate. Aspartate 30–histidine 31 contacts 1-deoxy-D-xylulose 5-phosphate. Arginine 39 is a binding site for 3-amino-2-oxopropyl phosphate. Histidine 64 serves as the catalytic Proton acceptor. 1-deoxy-D-xylulose 5-phosphate is bound by residues arginine 66 and histidine 71. The active-site Proton acceptor is glutamate 91. Threonine 121 provides a ligand contact to 1-deoxy-D-xylulose 5-phosphate. Residue histidine 217 is the Proton donor of the active site. Residues glycine 218 and glycine 239–histidine 240 contribute to the 3-amino-2-oxopropyl phosphate site.

Belongs to the PNP synthase family. Homooctamer; tetramer of dimers.

Its subcellular location is the cytoplasm. It carries out the reaction 3-amino-2-oxopropyl phosphate + 1-deoxy-D-xylulose 5-phosphate = pyridoxine 5'-phosphate + phosphate + 2 H2O + H(+). It functions in the pathway cofactor biosynthesis; pyridoxine 5'-phosphate biosynthesis; pyridoxine 5'-phosphate from D-erythrose 4-phosphate: step 5/5. Catalyzes the complicated ring closure reaction between the two acyclic compounds 1-deoxy-D-xylulose-5-phosphate (DXP) and 3-amino-2-oxopropyl phosphate (1-amino-acetone-3-phosphate or AAP) to form pyridoxine 5'-phosphate (PNP) and inorganic phosphate. This is Pyridoxine 5'-phosphate synthase from Psychrobacter arcticus (strain DSM 17307 / VKM B-2377 / 273-4).